Consider the following 393-residue polypeptide: Erythronate-4-phosphate dehydrogenase (393 aa).

Substrate contacts are provided by S57 and T79. Residue D159 participates in NAD(+) binding. R229 is a catalytic residue. D253 contributes to the NAD(+) binding site. E258 is an active-site residue. H275 functions as the Proton donor in the catalytic mechanism. G278 is an NAD(+) binding site. Y279 is a binding site for substrate.

This sequence belongs to the D-isomer specific 2-hydroxyacid dehydrogenase family. PdxB subfamily. As to quaternary structure, homodimer.

It is found in the cytoplasm. The enzyme catalyses 4-phospho-D-erythronate + NAD(+) = (R)-3-hydroxy-2-oxo-4-phosphooxybutanoate + NADH + H(+). It functions in the pathway cofactor biosynthesis; pyridoxine 5'-phosphate biosynthesis; pyridoxine 5'-phosphate from D-erythrose 4-phosphate: step 2/5. Catalyzes the oxidation of erythronate-4-phosphate to 3-hydroxy-2-oxo-4-phosphonooxybutanoate. In Colwellia psychrerythraea (strain 34H / ATCC BAA-681) (Vibrio psychroerythus), this protein is Erythronate-4-phosphate dehydrogenase.